We begin with the raw amino-acid sequence, 336 residues long: Protein-glutamate methylesterase/protein-glutamine glutaminase 3 (336 aa).

Positions 2-119 (KIAIVNDMPM…PNPREAAAPL (118 aa)) constitute a Response regulatory domain. At Asp-53 the chain carries 4-aspartylphosphate. Residues 147 to 336 (VSRRDRLVAI…APRLMEVFTQ (190 aa)) form the CheB-type methylesterase domain. Catalysis depends on residues Ser-159, His-186, and Asp-279.

Belongs to the CheB family. Post-translationally, phosphorylated by CheA. Phosphorylation of the N-terminal regulatory domain activates the methylesterase activity.

It is found in the cytoplasm. The enzyme catalyses [protein]-L-glutamate 5-O-methyl ester + H2O = L-glutamyl-[protein] + methanol + H(+). It catalyses the reaction L-glutaminyl-[protein] + H2O = L-glutamyl-[protein] + NH4(+). In terms of biological role, involved in chemotaxis. Part of a chemotaxis signal transduction system that modulates chemotaxis in response to various stimuli. Catalyzes the demethylation of specific methylglutamate residues introduced into the chemoreceptors (methyl-accepting chemotaxis proteins or MCP) by CheR. Also mediates the irreversible deamidation of specific glutamine residues to glutamic acid. This Pseudomonas syringae pv. tomato (strain ATCC BAA-871 / DC3000) protein is Protein-glutamate methylesterase/protein-glutamine glutaminase 3.